The following is a 533-amino-acid chain: Kelch-like protein 33 (533 aa).

6 Kelch repeats span residues 210 to 258, 273 to 322, 323 to 369, 371 to 418, 419 to 465, and 467 to 514; these read ALVV…ALPA, ELYV…ALDG, KLYA…ILEG, LYVS…ALGG, RLYV…VLQG, and LLVL…ILTL.

This Homo sapiens (Human) protein is Kelch-like protein 33 (KLHL33).